We begin with the raw amino-acid sequence, 147 residues long: Cyanate hydratase (147 aa).

Active-site residues include Arg-88, Glu-91, and Ser-114.

The protein belongs to the cyanase family.

It catalyses the reaction cyanate + hydrogencarbonate + 3 H(+) = NH4(+) + 2 CO2. Functionally, catalyzes the reaction of cyanate with bicarbonate to produce ammonia and carbon dioxide. This Cupriavidus necator (strain ATCC 17699 / DSM 428 / KCTC 22496 / NCIMB 10442 / H16 / Stanier 337) (Ralstonia eutropha) protein is Cyanate hydratase.